Here is a 635-residue protein sequence, read N- to C-terminus: Glutamine sensor PIB2 (635 aa).

The segment at Met1–Gln110 is disordered. The interval Met1 to Arg164 is may play a role in attenuating TORC1 signaling. The span at Arg33–Glu44 shows a compositional bias: basic and acidic residues. Ser46 and Ser53 each carry phosphoserine. Thr56 carries the post-translational modification Phosphothreonine. Polar residues predominate over residues Ser67–Asn85. 6 positions are modified to phosphoserine: Ser73, Ser113, Ser124, Ser148, Ser165, and Ser174. Disordered stretches follow at residues Asn123–Gly181 and Ser224–Val254. Residues Ser238–Val254 are compositionally biased toward low complexity. Ser300, Ser309, and Ser381 each carry phosphoserine. The segment at Leu304 to Arg440 is required for interaction with TORC1. The FYVE-type; atypical zinc finger occupies Asp452 to Glu527. 8 residues coordinate Zn(2+): Cys458, Cys461, Cys474, Cys477, Cys482, His485, Cys519, and Cys522. 2 disordered regions span residues His534–Lys557 and Ala570–Ile623. Composition is skewed to acidic residues over residues Ile543–Asn553 and Glu601–Asn616. The tract at residues Gly620–Phe635 is may be required for TORC1 activation.

Interacts with the TORC1 complex when activated by glutamine or cysteine. Interacts with TOR1; glutamine enhances the interaction. Interacts with KOG1; glutamine enhances the interaction. Interacts with TCO89. Interacts with LST8; glutamine enhances the interaction. Interacts with TOR2; glutamine enhances the interaction.

It is found in the vacuole membrane. With respect to regulation, activated by glutamine. May also be activated by cysteine. In terms of biological role, functions as an intracellular glutamine sensor that directly activates the TORC1 signaling pathway, to promote cell growth when glutamine is available. May play a role in repressing NPR1 activity independently of TORC1 signaling. This Saccharomyces cerevisiae (strain ATCC 204508 / S288c) (Baker's yeast) protein is Glutamine sensor PIB2.